The following is a 186-amino-acid chain: Ribosome-recycling factor (186 aa).

This sequence belongs to the RRF family.

It localises to the cytoplasm. Responsible for the release of ribosomes from messenger RNA at the termination of protein biosynthesis. May increase the efficiency of translation by recycling ribosomes from one round of translation to another. This Nitratidesulfovibrio vulgaris (strain DP4) (Desulfovibrio vulgaris) protein is Ribosome-recycling factor.